The sequence spans 164 residues: uncharacterized protein (164 aa).

The tract at residues 46–142 (GRSPEQKEHV…APDNSIYDTL (97 aa)) is disordered.

This is an uncharacterized protein from Caenorhabditis elegans.